The primary structure comprises 68 residues: UPF0435 protein SAB1812c (68 aa).

Belongs to the UPF0435 family.

This is UPF0435 protein SAB1812c from Staphylococcus aureus (strain bovine RF122 / ET3-1).